The primary structure comprises 403 residues: Leu/Ile/Val-binding protein homolog 8 (403 aa).

Positions 1-26 (MRLSRLLIGASLGVALSSTVFTAALA) are cleaved as a signal peptide.

This sequence belongs to the leucine-binding protein family.

Component of an amino-acid transport system. This is Leu/Ile/Val-binding protein homolog 8 from Brucella melitensis biotype 1 (strain ATCC 23456 / CCUG 17765 / NCTC 10094 / 16M).